Consider the following 313-residue polypeptide: Ribosomal RNA small subunit methyltransferase H (313 aa).

Residues 35-37 (GGH), D55, F79, D101, and Q108 contribute to the S-adenosyl-L-methionine site.

Belongs to the methyltransferase superfamily. RsmH family.

It is found in the cytoplasm. It carries out the reaction cytidine(1402) in 16S rRNA + S-adenosyl-L-methionine = N(4)-methylcytidine(1402) in 16S rRNA + S-adenosyl-L-homocysteine + H(+). Its function is as follows. Specifically methylates the N4 position of cytidine in position 1402 (C1402) of 16S rRNA. The protein is Ribosomal RNA small subunit methyltransferase H of Klebsiella pneumoniae subsp. pneumoniae (strain ATCC 700721 / MGH 78578).